Consider the following 363-residue polypeptide: S-adenosylmethionine:tRNA ribosyltransferase-isomerase (363 aa).

It belongs to the QueA family. Monomer.

It is found in the cytoplasm. The enzyme catalyses 7-aminomethyl-7-carbaguanosine(34) in tRNA + S-adenosyl-L-methionine = epoxyqueuosine(34) in tRNA + adenine + L-methionine + 2 H(+). Its pathway is tRNA modification; tRNA-queuosine biosynthesis. In terms of biological role, transfers and isomerizes the ribose moiety from AdoMet to the 7-aminomethyl group of 7-deazaguanine (preQ1-tRNA) to give epoxyqueuosine (oQ-tRNA). This Haemophilus influenzae (strain PittGG) protein is S-adenosylmethionine:tRNA ribosyltransferase-isomerase.